The primary structure comprises 134 residues: Small ribosomal subunit protein uS17c (134 aa).

A chloroplast-targeting transit peptide spans 1 to 37 (HHFFTGNGIGLNRFSNPISSPQTQTQTRSLPFPAIKA). The segment at 106 to 134 (FLAVPAPSRKSKKAGSSGELGIPLQSQQE) is disordered.

The protein belongs to the universal ribosomal protein uS17 family. In terms of assembly, part of the 30S ribosomal subunit.

The protein localises to the plastid. It is found in the chloroplast. Its function is as follows. One of the primary rRNA binding proteins, it binds specifically to the 5'-end of 16S ribosomal RNA. This is Small ribosomal subunit protein uS17c (RPS17) from Pisum sativum (Garden pea).